The primary structure comprises 212 residues: Protein-L-isoaspartate O-methyltransferase (212 aa).

Ser61 is an active-site residue.

The protein belongs to the methyltransferase superfamily. L-isoaspartyl/D-aspartyl protein methyltransferase family.

It is found in the cytoplasm. The catalysed reaction is [protein]-L-isoaspartate + S-adenosyl-L-methionine = [protein]-L-isoaspartate alpha-methyl ester + S-adenosyl-L-homocysteine. Its function is as follows. Catalyzes the methyl esterification of L-isoaspartyl residues in peptides and proteins that result from spontaneous decomposition of normal L-aspartyl and L-asparaginyl residues. It plays a role in the repair and/or degradation of damaged proteins. In Pseudoalteromonas atlantica (strain T6c / ATCC BAA-1087), this protein is Protein-L-isoaspartate O-methyltransferase.